The chain runs to 227 residues: UPF0173 metal-dependent hydrolase BCQ_4418 (227 aa).

This sequence belongs to the UPF0173 family.

The sequence is that of UPF0173 metal-dependent hydrolase BCQ_4418 from Bacillus cereus (strain Q1).